Here is a 129-residue protein sequence, read N- to C-terminus: D-ribose pyranase (129 aa).

The active-site Proton donor is histidine 20. Substrate-binding positions include aspartate 28, histidine 96, and 118–120 (YAN).

Belongs to the RbsD / FucU family. RbsD subfamily. Homodecamer.

It localises to the cytoplasm. It carries out the reaction beta-D-ribopyranose = beta-D-ribofuranose. The protein operates within carbohydrate metabolism; D-ribose degradation; D-ribose 5-phosphate from beta-D-ribopyranose: step 1/2. Its function is as follows. Catalyzes the interconversion of beta-pyran and beta-furan forms of D-ribose. The polypeptide is D-ribose pyranase (Staphylococcus saprophyticus subsp. saprophyticus (strain ATCC 15305 / DSM 20229 / NCIMB 8711 / NCTC 7292 / S-41)).